A 623-amino-acid polypeptide reads, in one-letter code: tRNA uridine 5-carboxymethylaminomethyl modification enzyme MnmG (623 aa).

Residues 11-16, Val123, and Ser178 each bind FAD; that span reads GAGHAG. 270-284 contributes to the NAD(+) binding site; sequence GPRYCPSIETKIVTF. Position 367 (Gln367) interacts with FAD.

The protein belongs to the MnmG family. In terms of assembly, homodimer. Heterotetramer of two MnmE and two MnmG subunits. FAD is required as a cofactor.

Its subcellular location is the cytoplasm. Its function is as follows. NAD-binding protein involved in the addition of a carboxymethylaminomethyl (cmnm) group at the wobble position (U34) of certain tRNAs, forming tRNA-cmnm(5)s(2)U34. The polypeptide is tRNA uridine 5-carboxymethylaminomethyl modification enzyme MnmG (Phocaeicola vulgatus (strain ATCC 8482 / DSM 1447 / JCM 5826 / CCUG 4940 / NBRC 14291 / NCTC 11154) (Bacteroides vulgatus)).